The sequence spans 75 residues: Brevinin-2HS2A (75 aa).

The first 22 residues, 1–22 (MFTLKKPLLLLFFLGTISLSLC), serve as a signal peptide directing secretion. Residues 23 to 40 (QEERDADEEEGEMIEEEV) constitute a propeptide that is removed on maturation. C69 and C75 are oxidised to a cystine.

Belongs to the frog skin active peptide (FSAP) family. Brevinin subfamily. Expressed by the skin glands.

The protein localises to the secreted. Its function is as follows. Has antimicrobial activity against some Gram-positive bacteria and fungi but has no activity against a range of Gram-negative bacteria except P.faecalis. Has antimicrobial activity against the Gram-positive bacteria S.aureus ATCC 25923 (MIC=19 uM), B.licheniformis X39 (MIC=37.5 uM) and R.rhodochrous X15 (MIC=9.5 uM), is virtually inactive against E.faecium 091299 (MIC=150 uM) and S.carnosus KHS (MIC=150 uM) and inactive against E.faecalis 981. Active against the Gram-negative bacterium P.faecalis X29 (MIC=9.5 uM) and is inactive against E.coli, P.aeruginosa and S.typhi. Active against C.albicans ATCC 2002 (MIC=19 uM) and is also active against the slime mold 090223 (MIC=37.5 uM). Has extremely low hemolytic activity against human erythrocytes (LC(50)=300 uM). This Odorrana hainanensis (Odor frog) protein is Brevinin-2HS2A.